Reading from the N-terminus, the 55-residue chain is Small ribosomal subunit protein eS31 (55 aa).

4 residues coordinate Zn(2+): Cys21, Cys24, Cys39, and Cys42. The segment at 21 to 42 (CPRCGPGVFLAEHADRFTCGRC) adopts a C4-type zinc-finger fold.

The protein belongs to the eukaryotic ribosomal protein eS31 family. Part of the 30S ribosomal subunit. Zn(2+) is required as a cofactor.

This Thermoplasma volcanium (strain ATCC 51530 / DSM 4299 / JCM 9571 / NBRC 15438 / GSS1) protein is Small ribosomal subunit protein eS31.